Consider the following 160-residue polypeptide: Photosystem II extrinsic protein V (160 aa).

An N-terminal signal peptide occupies residues 1 to 25; the sequence is MKRFILLAIATVFFFCQFQTNPVNA. Positions 62, 65, 66, and 117 each coordinate heme c.

The protein belongs to the cytochrome c family. PsbV subfamily. In terms of assembly, PSII is composed of 1 copy each of membrane proteins PsbA, PsbB, PsbC, PsbD, PsbE, PsbF, PsbH, PsbI, PsbJ, PsbK, PsbL, PsbM, PsbT, PsbX, PsbY, PsbZ, Psb30/Ycf12, peripheral proteins PsbO, CyanoQ (PsbQ), PsbU, PsbV and a large number of cofactors. It forms dimeric complexes. Heme c is required as a cofactor.

Its subcellular location is the cellular thylakoid membrane. One of the extrinsic, lumenal subunits of photosystem II (PSII). PSII is a light-driven water plastoquinone oxidoreductase, using light energy to abstract electrons from H(2)O, generating a proton gradient subsequently used for ATP formation. The extrinsic proteins stabilize the structure of photosystem II oxygen-evolving complex (OEC), the ion environment of oxygen evolution and protect the OEC against heat-induced inactivation. Low-potential cytochrome c that plays a role in the OEC of PSII. The polypeptide is Photosystem II extrinsic protein V (Rippkaea orientalis (strain PCC 8801 / RF-1) (Cyanothece sp. (strain PCC 8801))).